A 141-amino-acid polypeptide reads, in one-letter code: Large ribosomal subunit protein uL11 (141 aa).

Belongs to the universal ribosomal protein uL11 family. Part of the ribosomal stalk of the 50S ribosomal subunit. Interacts with L10 and the large rRNA to form the base of the stalk. L10 forms an elongated spine to which L12 dimers bind in a sequential fashion forming a multimeric L10(L12)X complex. One or more lysine residues are methylated.

In terms of biological role, forms part of the ribosomal stalk which helps the ribosome interact with GTP-bound translation factors. This is Large ribosomal subunit protein uL11 from Methylacidiphilum infernorum (isolate V4) (Methylokorus infernorum (strain V4)).